Consider the following 179-residue polypeptide: Large ribosomal subunit protein uL5 (179 aa).

The protein belongs to the universal ribosomal protein uL5 family. As to quaternary structure, part of the 50S ribosomal subunit; part of the 5S rRNA/L5/L18/L25 subcomplex. Contacts the 5S rRNA and the P site tRNA. Forms a bridge to the 30S subunit in the 70S ribosome.

Functionally, this is one of the proteins that bind and probably mediate the attachment of the 5S RNA into the large ribosomal subunit, where it forms part of the central protuberance. In the 70S ribosome it contacts protein S13 of the 30S subunit (bridge B1b), connecting the 2 subunits; this bridge is implicated in subunit movement. Contacts the P site tRNA; the 5S rRNA and some of its associated proteins might help stabilize positioning of ribosome-bound tRNAs. This chain is Large ribosomal subunit protein uL5, found in Vesicomyosocius okutanii subsp. Calyptogena okutanii (strain HA).